A 323-amino-acid polypeptide reads, in one-letter code: Glutathione synthetase (323 aa).

Residues 133–317 enclose the ATP-grasp domain; that stretch reads KMYALQFQSV…IGDQTIAALE (185 aa). Residue 159–215 participates in ATP binding; sequence LDELRAAVLKPLGGKAGEGILFLDPGDRNFNSLVEISTQQGQLPVMVQQYLPEAKDG. Mg(2+)-binding residues include Glu-288 and Asn-290.

This sequence belongs to the prokaryotic GSH synthase family. Requires Mg(2+) as cofactor. Mn(2+) is required as a cofactor.

It catalyses the reaction gamma-L-glutamyl-L-cysteine + glycine + ATP = glutathione + ADP + phosphate + H(+). Its pathway is sulfur metabolism; glutathione biosynthesis; glutathione from L-cysteine and L-glutamate: step 2/2. This chain is Glutathione synthetase, found in Synechococcus elongatus (strain ATCC 33912 / PCC 7942 / FACHB-805) (Anacystis nidulans R2).